We begin with the raw amino-acid sequence, 442 residues long: Exodeoxyribonuclease 7 large subunit (442 aa).

Belongs to the XseA family. As to quaternary structure, heterooligomer composed of large and small subunits.

It is found in the cytoplasm. It catalyses the reaction Exonucleolytic cleavage in either 5'- to 3'- or 3'- to 5'-direction to yield nucleoside 5'-phosphates.. Bidirectionally degrades single-stranded DNA into large acid-insoluble oligonucleotides, which are then degraded further into small acid-soluble oligonucleotides. The protein is Exodeoxyribonuclease 7 large subunit of Shewanella loihica (strain ATCC BAA-1088 / PV-4).